Consider the following 287-residue polypeptide: Zinc transporter ZIP9 (287 aa).

Residues 4–24 form a helical membrane-spanning segment; sequence FLSISLLSLAMLVGCYVAGII. An N-linked (GlcNAc...) asparagine glycan is attached at Asn29. Helical transmembrane passes span 35-55, 107-127, 147-167, 177-197, and 211-231; these read LKLV…AVIV, AYIG…DQIG, ITTT…LGAA, LIVF…LVSF, and HLLV…LGLS. Asn242 is a glycosylation site (N-linked (GlcNAc...) asparagine). Residues 245–265 form a helical membrane-spanning segment; the sequence is GVAMLFSAGTFLYVATVHVLP. The segment at 268 to 287 is disordered; sequence TSTNQSGSSLSPRPLPSGKN. N-linked (GlcNAc...) asparagine glycosylation occurs at Asn271. Residues 273 to 287 show a composition bias toward low complexity; sequence SGSSLSPRPLPSGKN.

It belongs to the ZIP transporter (TC 2.A.5) family.

Its subcellular location is the golgi apparatus. It is found in the trans-Golgi network membrane. The protein localises to the cell membrane. It localises to the cytoplasm. The protein resides in the perinuclear region. Its subcellular location is the mitochondrion. It is found in the nucleus. The catalysed reaction is Zn(2+)(in) = Zn(2+)(out). Transports zinc ions across cell and organelle membranes into the cytoplasm and regulates intracellular zinc homeostasis. Participates in the zinc ions efflux out of the secretory compartments. Regulates intracellular zinc level, resulting in the enhancement of AKT1 and MAPK3/MAPK1 (Erk1/2) phosphorylation in response to the BCR activation. Also functions as a membrane androgen receptor that mediates, through a G protein, the non-classical androgen signaling pathway, characterized by the activation of MAPK3/MAPK1 (Erk1/2) and transcription factors CREB1 or ATF1. This pathway contributes to CLDN1 and CLDN5 expression and tight junction formation between adjacent Sertoli cells. Mediates androgen-induced vascular endothelial cell proliferation through activation of an inhibitory G protein leading to the AKT1 and MAPK3/MAPK1 (Erk1/2) activation which in turn modulate inhibition (phosphorylation) of GSK3B and CCND1 transcription. Moreover, has dual functions as a membrane-bound androgen receptor and as an androgen-dependent zinc transporter both of which are mediated through an inhibitory G protein (Gi) that mediates both MAP kinase and zinc signaling leading to the androgen-dependent apoptotic process. This Rattus norvegicus (Rat) protein is Zinc transporter ZIP9.